Consider the following 268-residue polypeptide: AN1-type zinc finger protein 1 (268 aa).

Residue Ala2 is modified to N-acetylalanine. AN1-type zinc fingers lie at residues 4–52 (LDIG…VINE) and 58–106 (QHTS…IPKP). Cys10, Cys15, Cys25, Cys28, Cys33, His36, His42, Cys44, Cys64, Cys69, Cys79, Cys82, Cys87, His90, His96, and Cys98 together coordinate Zn(2+). Positions 160–260 (QTERIYFQVF…EYLNDEEQFC (101 aa)) are ubiquitin-like.

Associates with the 26S proteasome; this association occurs upon exposure to arsenite and is reduced in the presence of ATP. Interacts (via AN1-type 1 and 2 zinc fingers) with PSMD1; this interaction is increased upon arsenite treatment and occurs in an ATP-independent manner. Interacts with PSMC4. Interacts with PSMA1. Interacts (via its ubiquitin-like region) with VCP; this interaction occurs in an arsenite-dependent manner and is necessary for the recruitment of the ubiquitin-selective ATPase VCP to stress granules (SGs).

The protein localises to the cytoplasm. It is found in the stress granule. Functionally, plays a role in the regulation of cytoplasmic stress granules (SGs) turnover. SGs are dynamic and transient cytoplasmic ribonucleoprotein assemblies important for cellular protein homeostasis when protein production is suspended after acute exogenous stress. Associates with SGs and is involved in the efficient and specific arsenite-induced clearance process of SGs through the recruitment of the ubiquitin-selective ATPase VCP and the 26S proteasome. This process requires both complexes for efficient degradation of damaged ubiquitinated SG proteins during recovery from arsenite stress, and hence avoiding aberrant cytoplasmic SGs degradation via autophagy. The sequence is that of AN1-type zinc finger protein 1 from Homo sapiens (Human).